We begin with the raw amino-acid sequence, 213 residues long: MANETVLYDYWRSSASYRVRIALNLCGEAYRSVPVDLLAKAHRAPEHLARNPQGLVPVLDIDGERLTQSLAIIEYLAETRDGTGLLPAHPIDRQRVRALSYAVAMDIHPVCNLGVVARVMAGAGDGEAARREWMQKFIGEGLAAFERMLDHPATGAFCHGDRPTMADLCLVPQVYNARRWDVDLAACPLLVAIDRRCAGIDAFQRAHPDRAKP.

The 82-residue stretch at Asn-3–Gly-84 folds into the GST N-terminal domain. One can recognise a GST C-terminal domain in the interval His-89–Pro-213.

It belongs to the GST superfamily. Zeta family.

It carries out the reaction 4-maleylacetoacetate = 4-fumarylacetoacetate. It functions in the pathway amino-acid degradation; L-phenylalanine degradation; acetoacetate and fumarate from L-phenylalanine: step 5/6. This chain is Maleylacetoacetate isomerase (maiA), found in Rhizobium meliloti (strain 1021) (Ensifer meliloti).